We begin with the raw amino-acid sequence, 504 residues long: Chromosomal replication initiator protein DnaA (504 aa).

The interval 1–109 (MTADPDPPFV…PTDEPEDAPD (109 aa)) is domain I, interacts with DnaA modulators. The segment at 98-162 (ATPTDEPEDA…PDTSSDDSNA (65 aa)) is disordered. Over residues 109 to 125 (DSFADSPAPASVPAGPA) the composition is skewed to low complexity. Residues 110–163 (SFADSPAPASVPAGPADADEIDDDRDARVNAQESWPKYFSRPEPDTSSDDSNAV) are domain II. The tract at residues 164 to 380 (NLNRRYTFDT…GALIRVTAFA (217 aa)) is domain III, AAA+ region. 4 residues coordinate ATP: Gly208, Gly210, Lys211, and Thr212. The tract at residues 381–504 (SLNKTRIDRS…TTRIRQRAKR (124 aa)) is domain IV, binds dsDNA.

Belongs to the DnaA family. In terms of assembly, oligomerizes as a right-handed, spiral filament on DNA at oriC.

The protein resides in the cytoplasm. Functionally, plays an essential role in the initiation and regulation of chromosomal replication. ATP-DnaA binds to the origin of replication (oriC) to initiate formation of the DNA replication initiation complex once per cell cycle. Binds the DnaA box (a 9 base pair repeat at the origin) and separates the double-stranded (ds)DNA. Forms a right-handed helical filament on oriC DNA; dsDNA binds to the exterior of the filament while single-stranded (ss)DNA is stabiized in the filament's interior. The ATP-DnaA-oriC complex binds and stabilizes one strand of the AT-rich DNA unwinding element (DUE), permitting loading of DNA polymerase. After initiation quickly degrades to an ADP-DnaA complex that is not apt for DNA replication. Binds acidic phospholipids. Its function is as follows. The probable consensus sequence for the DnaA box of this bacterium is 5'-TT(G/C)TCCACA-3'. The sequence is that of Chromosomal replication initiator protein DnaA from Mycolicibacterium smegmatis (strain ATCC 700084 / mc(2)155) (Mycobacterium smegmatis).